The sequence spans 496 residues: E3 ubiquitin-protein ligase CBL-C (496 aa).

The segment at 7-144 (PRGWQRGEPR…SALFPAGKYC (138 aa)) is 4H. In terms of domain architecture, Cbl-PTB spans 7–320 (PRGWQRGEPR…GKKHNPDLTE (314 aa)). The segment at 145–217 (GHLYQLTKGS…FEFDVFTRLF (73 aa)) is EF-hand-like. Residues Asp198, Thr200, Asn202, and Glu209 each coordinate Ca(2+). Residues 218–320 (QPWPTLLRNW…GKKHNPDLTE (103 aa)) form an SH2-like region. Position 263 (Arg263) interacts with 4-O-phospho-L-tyrosine. The tract at residues 321–349 (LCRVEPYQRIQVSEEQLLLYQAMNSTFQL) is linker. Tyr340 is subject to Phosphotyrosine; by SRC. An RING-type zinc finger spans residues 350–389 (CKICAERDKDVRIEPCGHLLCSCCLAAWQDSDSQTCPFCR). An interaction with RET region spans residues 350–494 (CKICAERDKD…RPRAREEATE (145 aa)). The interval 432 to 453 (PVIPSAPSLLPEDQFPQGPQDK) is disordered.

As to quaternary structure, interacts with Ubiquitin-conjugating enzyme E2 UBE2D2 and UBE2D3. Isoform 1 interacts with EGFR (tyrosine phosphorylated). Interacts with the SH3 domain proteins LYN and CRK. Interacts (via RING-type zinc finger) with TGFB1I1 (via LIM zinc-binding domain 2); the interaction is direct and enhances the E3 activity. Interacts directly with RET (inactive) and CD2AP; dissociates from RET upon RET activation by GDNF which also increases the interaction with CD2AP suggesting dissociation as CBLC:CD2AP complex. Interacts with SRC; the interaction is enhanced when SRC is phosphorylated at 'Tyr-419'. Phosphorylated on tyrosines by EGFR. In terms of processing, phosphorylated on multiple tyrosine residues by SRC. Isoform 1, but not isoform 2, is phosphorylated on tyrosines by EGFR. Post-translationally, autoubiquitinated, when phosphorylated at Tyr-340. In terms of tissue distribution, widely expressed in tissues, where the expression is restricted to epithelial cells (at protein level).

The catalysed reaction is S-ubiquitinyl-[E2 ubiquitin-conjugating enzyme]-L-cysteine + [acceptor protein]-L-lysine = [E2 ubiquitin-conjugating enzyme]-L-cysteine + N(6)-ubiquitinyl-[acceptor protein]-L-lysine.. Phosphorylation at Tyr-340 is necessary and sufficient for the activation of E3 activity. Acts as an E3 ubiquitin-protein ligase, which accepts ubiquitin from specific E2 ubiquitin-conjugating enzymes, and then transfers it to substrates promoting their degradation by the proteasome. Functionally coupled with the E2 ubiquitin-protein ligases UB2D1, UB2D2 and UB2D3. Regulator of EGFR mediated signal transduction; upon EGF activation, ubiquitinates EGFR. Isoform 1, but not isoform 2, inhibits EGF stimulated MAPK1 activation. Promotes ubiquitination of SRC phosphorylated at 'Tyr-424', has the highest ubiquitin ligase activity among CBL family proteins. In collaboration with CD2AP may act as regulatory checkpoint for Ret signaling by modulating the rate of RET degradation after ligand activation; CD2AP converts it from an inhibitor to a promoter of RET degradation; the function limits the potency of GDNF on neuronal survival. This is E3 ubiquitin-protein ligase CBL-C (Cblc) from Mus musculus (Mouse).